We begin with the raw amino-acid sequence, 504 residues long: Glutamate--tRNA ligase (504 aa).

The 'HIGH' region motif lies at 25–35; sequence PSPTGNPHVGL. Residues Cys122, Cys124, Cys149, and Asp151 each coordinate Zn(2+). A 'KMSKS' region motif is present at residues 270-274; the sequence is KLSKR. Lys273 contacts ATP.

Belongs to the class-I aminoacyl-tRNA synthetase family. Glutamate--tRNA ligase type 1 subfamily. In terms of assembly, monomer. Zn(2+) is required as a cofactor.

The protein resides in the cytoplasm. The catalysed reaction is tRNA(Glu) + L-glutamate + ATP = L-glutamyl-tRNA(Glu) + AMP + diphosphate. Functionally, catalyzes the attachment of glutamate to tRNA(Glu) in a two-step reaction: glutamate is first activated by ATP to form Glu-AMP and then transferred to the acceptor end of tRNA(Glu). The sequence is that of Glutamate--tRNA ligase from Streptomyces griseus subsp. griseus (strain JCM 4626 / CBS 651.72 / NBRC 13350 / KCC S-0626 / ISP 5235).